The following is a 146-amino-acid chain: Hemoglobin subunit beta (146 aa).

Positions 2–146 constitute a Globin domain; that stretch reads HWSAEEKQLI…VAHALARKYH (145 aa). Residues His-63 and His-92 each coordinate heme b.

This sequence belongs to the globin family. As to quaternary structure, heterotetramer of two alpha chains and two beta chains. In terms of tissue distribution, red blood cells.

Its function is as follows. Involved in oxygen transport from the lung to the various peripheral tissues. The protein is Hemoglobin subunit beta (HBB) of Phasianus colchicus colchicus (Black-necked pheasant).